Reading from the N-terminus, the 497-residue chain is Protein DETOXIFICATION 25 (497 aa).

The next 12 membrane-spanning stretches (helical) occupy residues 43–63 (LPST…QAFI), 70–90 (GLAA…GIMA), 121–141 (IVDT…GPIL), 157–177 (IYPW…MQMY), 186–206 (IIGI…WWCV), 216–236 (ALLG…VYVF), 261–281 (LSIS…IIVL), 291–311 (IAIS…NICF), 339–359 (VVLV…LAFG), 381–401 (IVLS…GVAI), 416–436 (SYYA…NFGI), and 438–458 (GLWS…CYVI).

This sequence belongs to the multi antimicrobial extrusion (MATE) (TC 2.A.66.1) family.

The protein localises to the membrane. The polypeptide is Protein DETOXIFICATION 25 (Arabidopsis thaliana (Mouse-ear cress)).